The sequence spans 58 residues: MIYRNWSLLSSTVVIWGGVATAGLAGIFLFGGKEKFQNYLCREGERLRQQDRAAMGKN.

In terms of assembly, component of complex II composed of eight subunits in plants: four classical SDH subunits SDH1, SDH2, SDH3 and SDH4 (a flavoprotein (FP), an iron-sulfur protein (IP), and a cytochrome b composed of a large and a small subunit.), as well as four subunits unknown in mitochondria from bacteria and heterotrophic eukaryotes.

The protein localises to the mitochondrion inner membrane. The protein operates within carbohydrate metabolism; tricarboxylic acid cycle. This is Succinate dehydrogenase subunit 8A, mitochondrial from Oryza sativa subsp. japonica (Rice).